A 1135-amino-acid chain; its full sequence is Exportin-6-A (1135 aa).

An Importin N-terminal domain is found at 31–97 (IESLLNNFAQ…RNSLPKLLLS (67 aa)).

This sequence belongs to the exportin family. Expressed during meiotic maturation 2 hours after germinal vesicle break down (GVBD) and in unfertilized and fertilized eggs, but not in oocytes (at protein level). Expressed in somatic cells, in oocytes, during meiotic maturation and in unfertilized and fertilized eggs.

It localises to the nucleus. The protein localises to the cytoplasm. Mediates the nuclear export of actin and profilin-actin complexes in somatic cells. Oocyte nuclei lack active actin export. The sequence is that of Exportin-6-A (xpo6-a) from Xenopus laevis (African clawed frog).